The primary structure comprises 286 residues: NAD kinase (286 aa).

Asp-67 (proton acceptor) is an active-site residue. Residues 67-68 (DG), Arg-72, 141-142 (ND), Arg-152, Asp-171, 182-187 (TAYSLS), and Gln-242 contribute to the NAD(+) site.

This sequence belongs to the NAD kinase family. Requires a divalent metal cation as cofactor.

The protein resides in the cytoplasm. It carries out the reaction NAD(+) + ATP = ADP + NADP(+) + H(+). Its function is as follows. Involved in the regulation of the intracellular balance of NAD and NADP, and is a key enzyme in the biosynthesis of NADP. Catalyzes specifically the phosphorylation on 2'-hydroxyl of the adenosine moiety of NAD to yield NADP. This is NAD kinase from Ruminiclostridium cellulolyticum (strain ATCC 35319 / DSM 5812 / JCM 6584 / H10) (Clostridium cellulolyticum).